We begin with the raw amino-acid sequence, 241 residues long: Probable GTP-binding protein EngB (241 aa).

Positions 56–240 (GPVEIAFAGR…RAAIALLLKE (185 aa)) constitute an EngB-type G domain. Residues 64–71 (GRSNVGKS), 91–95 (GRTQE), 118–121 (DMPG), 185–188 (TKID), and 219–221 (TSS) each bind GTP. 2 residues coordinate Mg(2+): S71 and T93.

It belongs to the TRAFAC class TrmE-Era-EngA-EngB-Septin-like GTPase superfamily. EngB GTPase family. Requires Mg(2+) as cofactor.

In terms of biological role, necessary for normal cell division and for the maintenance of normal septation. The protein is Probable GTP-binding protein EngB of Brucella suis biovar 1 (strain 1330).